The chain runs to 906 residues: MSQQTTIRKLAELVNTPVDKLLVQLAEAGMKFSGPDQVVTSTEKMKLLGFLRRTHGKAETPAEAASEAAKKITLNRRKLQEVTVSAGRTKTTVNVEVRQKRTYVKSENEGSGRATPMTPDEERADILAKLAASRQRNLDEQQRLAESDRVRDEEIQRKRDEEQAAKDRAEAERKAAEEAAAAASAPAPAPVAAAPTPSAAAPAARAPSSPSSAPRPSRPGGASPASRPSTPARPDDRNNAAKHKTRGSHVMVAGVEDDDATKRFAGQLHLSAADRARRSNVRGKPTGRPGSSSSRRGNDNGRGSNQANSGPHGFERPTAPVVREVAIGETITVADLAQKLALKGGDVVKALFKMGVMATITQSIDHDTAALVTEELGHKAVRADNADFEDALLAHAEDAQGDTTTRPPVVTIMGHVDHGKTSLLDYIRRTKIASGEAGGITQHIGAYHVETDRGVISFLDTPGHAAFTSMRARGAKITDIVVLVVAADDGVMPQTKEAVAHAKAAGVPLIVAVNKIDKAGADPLRVKNELLAENVVAEDFGGDTQFIEVSAKVGTGVDTLLDAISLQAEVLELKAVAEGRASGTVIESSLDKGRGPVATVLVQQGALKRGDYLVCGIQYGRVRALFDETGHQPGSAGPSIPVQVLGLSGVPEAGDDFVVVDDERLAKDVAQQRETKRRESRLVASATNRMEDILAQMGKGEGQQVLNLVIKADVQGSVEALKQSLVALSNEDIRINVIHSGVGGITESDANSAAASKATIIGFNVRADASARKIVESNGVDLRYFSIIYDVIDQVKQVASGLLGVEIREEIMGIAQVRDVFRSSKFGAVAGCMIIEGVVKRSKPIRVLRDSVVVFEGELESLRRFKENVDEVRNGNECGIGVKAYNDVKAGDQIECFERIEVARTL.

Disordered stretches follow at residues 134-250 (RQRN…GSHV) and 269-317 (HLSA…FERP). Residues 136–177 (RNLDEQQRLAESDRVRDEEIQRKRDEEQAAKDRAEAERKAAE) are compositionally biased toward basic and acidic residues. 2 stretches are compositionally biased toward low complexity: residues 178 to 232 (EAAA…STPA) and 287 to 305 (GRPG…RGSN). Residues 405-574 (TRPPVVTIMG…SLQAEVLELK (170 aa)) form the tr-type G domain. The interval 414 to 421 (GHVDHGKT) is G1. 414–421 (GHVDHGKT) contacts GTP. The tract at residues 439-443 (GITQH) is G2. The segment at 460 to 463 (DTPG) is G3. Residues 460 to 464 (DTPGH) and 514 to 517 (NKID) each bind GTP. The interval 514–517 (NKID) is G4. The segment at 550–552 (SAK) is G5.

Belongs to the TRAFAC class translation factor GTPase superfamily. Classic translation factor GTPase family. IF-2 subfamily.

The protein localises to the cytoplasm. Its function is as follows. One of the essential components for the initiation of protein synthesis. Protects formylmethionyl-tRNA from spontaneous hydrolysis and promotes its binding to the 30S ribosomal subunits. Also involved in the hydrolysis of GTP during the formation of the 70S ribosomal complex. This Xanthomonas oryzae pv. oryzae (strain MAFF 311018) protein is Translation initiation factor IF-2.